Here is a 124-residue protein sequence, read N- to C-terminus: Acidic phospholipase A2 (124 aa).

7 disulfide bridges follow: cysteine 26-cysteine 117, cysteine 28-cysteine 44, cysteine 43-cysteine 97, cysteine 49-cysteine 124, cysteine 50-cysteine 90, cysteine 57-cysteine 83, and cysteine 77-cysteine 88. Tyrosine 27, glycine 29, and glycine 31 together coordinate Ca(2+). Histidine 47 is a catalytic residue. Aspartate 48 contributes to the Ca(2+) binding site. Glutamate 89 is a catalytic residue.

It belongs to the phospholipase A2 family. Group II subfamily. D49 sub-subfamily. Ca(2+) serves as cofactor. As to expression, expressed by the venom gland.

It is found in the secreted. The catalysed reaction is a 1,2-diacyl-sn-glycero-3-phosphocholine + H2O = a 1-acyl-sn-glycero-3-phosphocholine + a fatty acid + H(+). Functionally, snake venom phospholipase A2 (PLA2) that inhibits collagen- and ADP-induced platelet aggregation. PLA2 catalyzes the calcium-dependent hydrolysis of the 2-acyl groups in 3-sn-phosphoglycerides. This Bothrops jararaca (Jararaca) protein is Acidic phospholipase A2.